Reading from the N-terminus, the 201-residue chain is Peroxiredoxin prdx-2 (201 aa).

The region spanning 10-168 (AFIGKPAPQF…TLRLVQAFQF (159 aa)) is the Thioredoxin domain. Catalysis depends on cysteine 55, which acts as the Cysteine sulfenic acid (-SOH) intermediate.

This sequence belongs to the peroxiredoxin family. AhpC/Prx1 subfamily. Monomer and homodimer; disulfide-linked. Under nonstress conditions, present in the reduced monomeric form. Forms active hyperoxidized monomers and disulfide-linked homodimers upon oxidation by hydrogen peroxide. Forms active oxidized homodimers in response to the drug metformin. Post-translationally, the enzyme can be inactivated by further oxidation of the cysteine sulfenic acid (C(P)-SOH) to sulphinic acid (C(P)-SO2H) instead of its condensation to a disulfide bond. As to expression, expressed in the gonad, neurons and intestine (at protein level). Expressed in the pharyngeal inter-neuron I4 and the sensory interneuron I2. Expressed in the intestine, pharyngeal muscle 1, vulval muscle, body wall muscle, epithelial cells e1 and e3, and neurons in the head and tail.

It is found in the cytoplasm. The catalysed reaction is a hydroperoxide + [thioredoxin]-dithiol = an alcohol + [thioredoxin]-disulfide + H2O. With respect to regulation, activated following oxidation of the conserved redox-active cysteine residue, which subsequently allows for the oxidation and activation of substrates. In terms of biological role, thiol-specific peroxidase that catalyzes the reduction of hydrogen peroxide and organic hydroperoxides to water and alcohols, respectively. In I2 pharyngeal neurons, required for the inhibition of feeding in response to light and hydrogen peroxide. In the intestine, plays a role in protecting cells against oxidative stress by detoxifying peroxides such as hydrogen peroxide. In addition, plays a role in the recovery from oxidative stress induced by hydrogen peroxide. In its hyperoxidized form (induced by hydrogen peroxide), confers protection against heat stress. However, has a low tendency for overoxidation during the normal lifespan. Increases sensitivity to cytotoxicity caused by metalloids and heavy metals such as arsenic and cadmium by playing a role in inhibiting the expression of phase II detoxification genes such as gcs-1 in intestinal cells. In addition, in response to arsenite, promotes the secretion of the insulin ligand daf-28 into the pseudocoelom, which negatively regulates the activities of daf-16 and skn-1. Plays a role in promoting longevity. Plays a role in the mitohormetic pathway by promoting the activation of pmk-1 in response to the drug metformin. The protein is Peroxiredoxin prdx-2 of Caenorhabditis elegans.